A 288-amino-acid polypeptide reads, in one-letter code: Pyridoxal kinase PdxY (288 aa).

Residues Ser-12 and 47 to 48 (TQ) each bind substrate. ATP-binding positions include Asp-114, Glu-151, Lys-184, and 211–214 (RPLL). Asp-225 contributes to the substrate binding site.

Belongs to the pyridoxine kinase family. PdxY subfamily. Homodimer. The cofactor is Mg(2+).

It carries out the reaction pyridoxal + ATP = pyridoxal 5'-phosphate + ADP + H(+). Its pathway is cofactor metabolism; pyridoxal 5'-phosphate salvage; pyridoxal 5'-phosphate from pyridoxal: step 1/1. Pyridoxal kinase involved in the salvage pathway of pyridoxal 5'-phosphate (PLP). Catalyzes the phosphorylation of pyridoxal to PLP. The protein is Pyridoxal kinase PdxY of Pseudomonas savastanoi pv. phaseolicola (strain 1448A / Race 6) (Pseudomonas syringae pv. phaseolicola (strain 1448A / Race 6)).